Reading from the N-terminus, the 179-residue chain is Large ribosomal subunit protein uL6 (179 aa).

It belongs to the universal ribosomal protein uL6 family. As to quaternary structure, part of the 50S ribosomal subunit.

In terms of biological role, this protein binds to the 23S rRNA, and is important in its secondary structure. It is located near the subunit interface in the base of the L7/L12 stalk, and near the tRNA binding site of the peptidyltransferase center. This is Large ribosomal subunit protein uL6 from Alkaliphilus oremlandii (strain OhILAs) (Clostridium oremlandii (strain OhILAs)).